A 1325-amino-acid chain; its full sequence is Bile salt export pump (1325 aa).

Over 1-62 (MSDAVILRSV…FSSTTDIWLM (62 aa)) the chain is Cytoplasmic. The ABC transmembrane type-1 1 domain occupies 62 to 385 (MFVGSLCAFL…ASSCLEAFAT (324 aa)). Residues 63–83 (FVGSLCAFLHGLSHPGVLLIF) form a helical membrane-spanning segment. Topologically, residues 84–147 (GTMTDVFIAY…MIKFASYYAG (64 aa)) are extracellular. N-linked (GlcNAc...) asparagine glycosylation is found at Asn109, Asn116, Asn122, and Asn125. A helical transmembrane segment spans residues 148-168 (IALLVLITGYIQICFWVIAAA). The Cytoplasmic segment spans residues 169–240 (RQIQKMRKIS…FLLGFYQGWK (72 aa)). The chain crosses the membrane as a helical span at residues 241-261 (LTLVIISVSPLIGIGAAIIGL). Over 262-319 (SVSKFTDYELKAYAKAGSVADEVISSMRTVAAFGGEKKEVERYEKNLVFAQRWGIRKG) the chain is Extracellular. Residues 320-340 (IVMGFFTGFMWCLIFLCYALA) traverse the membrane as a helical segment. Residues 341–353 (FWYGSKLVLEDGE) lie on the Cytoplasmic side of the membrane. The helical transmembrane segment at 354 to 374 (YTAGTLVQIFLSILLGALNLG) threads the bilayer. Residues Asn375, Asn424, and Asn440 are each glycosylated (N-linked (GlcNAc...) asparagine). Residues 375-759 (NASSCLEAFA…KFNAPEWPYM (385 aa)) lie on the Extracellular side of the membrane. An ABC transporter 1 domain is found at 420–656 (IEFHNVTFHY…KGVYFTLVTL (237 aa)). Residue 455-462 (GSSGSGKS) coordinates ATP. Asn591 carries an N-linked (GlcNAc...) asparagine glycan. The ABC transmembrane type-1 2 domain maps to 759–1047 (MLFGAVGAAV…ASSYTPSYAK (289 aa)). Residues 760 to 780 (LFGAVGAAVNGSVTPLYAFLF) form a helical membrane-spanning segment. Residues 781 to 798 (SQILGTFSLPDKEEQRSQ) are Cytoplasmic-facing. Residues 799–819 (INGVCLLFVAVGCVSLCTQFL) form a helical membrane-spanning segment. The Extracellular portion of the chain corresponds to 820 to 894 (QGYAFAKSGE…NSFTNVTVAM (75 aa)). Asn889 carries N-linked (GlcNAc...) asparagine glycosylation. The helical transmembrane segment at 895-915 (IIAFFFSWKLSLVIMCFFPFL) threads the bilayer. The Cytoplasmic segment spans residues 916 to 983 (ALSGALQTRM…PFKTAFRKAN (68 aa)). Residues 984 to 1004 (VYGFCFGFSQCIVFVANSASY) traverse the membrane as a helical segment. The Extracellular segment spans residues 1005–1014 (RYGGYLIPNE). Residues 1015–1035 (GLHFSYVFRVISSVVLSATAL) form a helical membrane-spanning segment. Residues 1036–1325 (GRASSYTPSY…KLVTTGAPIS (290 aa)) are Cytoplasmic-facing. The ABC transporter 2 domain occupies 1082–1320 (VDFVDCKFTY…KGAYYKLVTT (239 aa)). 1117–1124 (GSSGCGKS) serves as a coordination point for ATP.

Belongs to the ABC transporter superfamily. ABCB family. Multidrug resistance exporter (TC 3.A.1.201) subfamily. Interacts with HAX1. Interacts with the adapter protein complex 2 (AP-2) throught AP2A2 or AP2A1; this interaction regulates cell membrane expression of ABCB11 through its internalization in a clathrin-dependent manner and its subsequent degradation. Post-translationally, N-glycosylated. In terms of processing, ubiquitinated; short-chain ubiquitination regulates cell-Surface expression of ABCB11. As to expression, liver.

It localises to the apical cell membrane. The protein localises to the recycling endosome membrane. The protein resides in the endosome. Its subcellular location is the cell membrane. It carries out the reaction cholate(in) + ATP + H2O = cholate(out) + ADP + phosphate + H(+). The enzyme catalyses taurocholate(in) + ATP + H2O = taurocholate(out) + ADP + phosphate + H(+). It catalyses the reaction glycocholate(in) + ATP + H2O = glycocholate(out) + ADP + phosphate + H(+). The catalysed reaction is glycochenodeoxycholate(in) + ATP + H2O = glycochenodeoxycholate(out) + ADP + phosphate + H(+). It carries out the reaction taurochenodeoxycholate(in) + ATP + H2O = taurochenodeoxycholate(out) + ADP + phosphate + H(+). The enzyme catalyses glycoursodeoxycholate(in) + ATP + H2O = glycoursodeoxycholate(out) + ADP + phosphate + H(+). It catalyses the reaction tauroursodeoxycholate(in) + ATP + H2O = tauroursodeoxycholate(out) + ADP + phosphate + H(+). The catalysed reaction is taurodeoxycholate(in) + ATP + H2O = taurodeoxycholate(out) + ADP + phosphate + H(+). It carries out the reaction taurolithocholate 3-sulfate(in) + ATP + H2O = taurolithocholate 3-sulfate(out) + ADP + phosphate + H(+). The enzyme catalyses pravastatin(in) + ATP + H2O = pravastatin(out) + ADP + phosphate + H(+). Its activity is regulated as follows. The uptake of taurocholate is inhibited by taurolithocholate sulfate with an IC(50) of 9 uM. Pravastatin competitively inhibits the transport of taurocholic acid. Cyclosporin A, glibenclamide, rifampicin and troglitazonestrongly competitively inhibit the transport activity of taurocholate. The canalicular transport activity of taurocholate is strongly dependent on canalicular membrane cholesterol content. The uptake of taurocholate is increased by short- and medium-chain fatty acids. Cholesterol increases transport capacity of taurocholate without affecting the affinity for the substrate. In terms of biological role, catalyzes the transport of the major hydrophobic bile salts, such as taurine and glycine-conjugated cholic acid across the canalicular membrane of hepatocytes in an ATP-dependent manner, therefore participates in hepatic bile acid homeostasis and consequently to lipid homeostasis through regulation of biliary lipid secretion in a bile salts dependent manner. Transports taurine-conjugated bile salts more rapidly than glycine-conjugated bile salts. Also transports non-bile acid compounds, such as pravastatin and fexofenadine in an ATP-dependent manner and may be involved in their biliary excretion. This chain is Bile salt export pump, found in Canis lupus familiaris (Dog).